The sequence spans 311 residues: Methionyl-tRNA formyltransferase (311 aa).

Ser112 to Pro115 provides a ligand contact to (6S)-5,6,7,8-tetrahydrofolate.

This sequence belongs to the Fmt family.

The catalysed reaction is L-methionyl-tRNA(fMet) + (6R)-10-formyltetrahydrofolate = N-formyl-L-methionyl-tRNA(fMet) + (6S)-5,6,7,8-tetrahydrofolate + H(+). Its function is as follows. Attaches a formyl group to the free amino group of methionyl-tRNA(fMet). The formyl group appears to play a dual role in the initiator identity of N-formylmethionyl-tRNA by promoting its recognition by IF2 and preventing the misappropriation of this tRNA by the elongation apparatus. This chain is Methionyl-tRNA formyltransferase, found in Sinorhizobium fredii (strain NBRC 101917 / NGR234).